A 436-amino-acid chain; its full sequence is UPF0597 protein YhaM (436 aa).

This sequence belongs to the UPF0597 family.

The chain is UPF0597 protein YhaM from Shigella flexneri serotype 5b (strain 8401).